Here is a 595-residue protein sequence, read N- to C-terminus: Guanylate-binding protein 3 (595 aa).

The GTPase domain (Globular) stretch occupies residues 1–309 (MAPEIHMTGP…NAISRGDLPC (309 aa)). Residues 35 to 276 (TQPVVVVAIV…FCSYIFSNSK (242 aa)) form the GB1/RHD3-type G domain. GTP contacts are provided by residues 45 to 52 (GLYRTGKS), 67 to 69 (LGS), and 97 to 101 (DTEGL). A coiled-coil region spans residues 482–595 (EKEKEIEVEC…KRYMSHKLKI (114 aa)).

Belongs to the TRAFAC class dynamin-like GTPase superfamily. GB1/RHD3 GTPase family. GB1 subfamily. Heterodimer with other family members, including GBP1, GBP2 and GBP5. Dimerization regulates subcellular location.

Its subcellular location is the cytoplasm. It localises to the perinuclear region. The protein localises to the golgi apparatus membrane. It catalyses the reaction GTP + H2O = GDP + phosphate + H(+). Its function is as follows. Interferon (IFN)-inducible GTPase that plays important roles in innate immunity against a diverse range of bacterial, viral and protozoan pathogens. Hydrolyzes GTP very efficiently; GDP rather than GMP is the major reaction product. Following infection, recruited to the pathogen-containing vacuoles or vacuole-escaped bacteria and acts as a positive regulator of inflammasome assembly by promoting the release of inflammasome ligands from bacteria. Acts by promoting lysis of pathogen-containing vacuoles, releasing pathogens into the cytosol. Following pathogen release in the cytosol, promotes recruitment of proteins that mediate bacterial cytolysis: this liberates ligands that are detected by inflammasomes, such as lipopolysaccharide (LPS) that activates the non-canonical CASP4/CASP11 inflammasome or double-stranded DNA (dsDNA) that activates the AIM2 inflammasome. Exhibits antiviral activity against influenza virus. Functionally, shows the most prominent antiviral activity in epithelial cells. This Homo sapiens (Human) protein is Guanylate-binding protein 3 (GBP3).